Reading from the N-terminus, the 504-residue chain is D-alanine--D-alanyl carrier protein ligase (504 aa).

An ATP-binding site is contributed by 152–153 (TS). D-alanine is bound at residue aspartate 197. 292 to 297 (NTYGPT) contacts ATP. Position 301 (valine 301) interacts with D-alanine. ATP-binding positions include aspartate 383, 394 to 397 (YNGR), and lysine 492. Lysine 492 is a D-alanine binding site.

The protein belongs to the ATP-dependent AMP-binding enzyme family. DltA subfamily.

It is found in the cytoplasm. It catalyses the reaction holo-[D-alanyl-carrier protein] + D-alanine + ATP = D-alanyl-[D-alanyl-carrier protein] + AMP + diphosphate. It participates in cell wall biogenesis; lipoteichoic acid biosynthesis. Functionally, catalyzes the first step in the D-alanylation of lipoteichoic acid (LTA), the activation of D-alanine and its transfer onto the D-alanyl carrier protein (Dcp) DltC. In an ATP-dependent two-step reaction, forms a high energy D-alanyl-AMP intermediate, followed by transfer of the D-alanyl residue as a thiol ester to the phosphopantheinyl prosthetic group of the Dcp. D-alanylation of LTA plays an important role in modulating the properties of the cell wall in Gram-positive bacteria, influencing the net charge of the cell wall. The chain is D-alanine--D-alanyl carrier protein ligase from Bacillus thuringiensis (strain Al Hakam).